A 350-amino-acid polypeptide reads, in one-letter code: Spermidine/putrescine import ATP-binding protein PotA (350 aa).

Residues 6-236 form the ABC transporter domain; the sequence is LELRNVTKDY…PENLWVAKFI (231 aa). 38-45 contributes to the ATP binding site; the sequence is GPSGCGKT.

Belongs to the ABC transporter superfamily. Spermidine/putrescine importer (TC 3.A.1.11.1) family. In terms of assembly, the complex is composed of two ATP-binding proteins (PotA), two transmembrane proteins (PotB and PotC) and a solute-binding protein (PotD).

Its subcellular location is the cell membrane. The catalysed reaction is ATP + H2O + polyamine-[polyamine-binding protein]Side 1 = ADP + phosphate + polyamineSide 2 + [polyamine-binding protein]Side 1.. Functionally, part of the ABC transporter complex PotABCD involved in spermidine/putrescine import. Responsible for energy coupling to the transport system. This is Spermidine/putrescine import ATP-binding protein PotA from Mesoplasma florum (strain ATCC 33453 / NBRC 100688 / NCTC 11704 / L1) (Acholeplasma florum).